We begin with the raw amino-acid sequence, 335 residues long: UPF0353 protein MAP_1207 (335 aa).

2 consecutive transmembrane segments (helical) span residues 18-38 and 67-87; these read WFFL…LMQL and LPAI…AGPT. Residues 98 to 294 form the VWFA domain; that stretch reads VVMLVIDVSQ…QELKSVYATL (197 aa). A helical transmembrane segment spans residues 309-329; the sequence is VGWVRLGALVLALAALTALLI.

It belongs to the UPF0353 family.

It is found in the cell membrane. In Mycolicibacterium paratuberculosis (strain ATCC BAA-968 / K-10) (Mycobacterium paratuberculosis), this protein is UPF0353 protein MAP_1207.